The sequence spans 769 residues: Portal protein (769 aa).

Residues 458–479 are putative leucine zipper motif; it reads LEGYVNNLFKTIEGLKDVNSDL. Disordered regions lie at residues 654–675 and 750–769; these read RGPRRTPSPSWGLPDPTEDDER and RQLTNTSRRGVGCERRDRRS. The span at 760 to 769 shows a compositional bias: basic and acidic residues; the sequence is VGCERRDRRS.

Belongs to the herpesviridae portal protein family. Homododecamerizes. Interacts with terminase subunits TRM1 and TRM3.

The protein localises to the virion. Its subcellular location is the host nucleus. Forms a portal in the viral capsid through which viral DNA is translocated during DNA packaging. Assembles as a dodecamer at a single fivefold axe of the T=16 icosahedric capsid. Binds to the molecular motor that translocates the viral DNA, termed terminase. This chain is Portal protein (54), found in Homo sapiens (Human).